Reading from the N-terminus, the 685-residue chain is Delta-like protein 4 (685 aa).

Positions 1 to 26 (MAAASRSASGWALLLLVALWQQRAAG) are cleaved as a signal peptide. Residues 27 to 529 (SGVFQLQLQE…PVGLPPSFPW (503 aa)) are Extracellular-facing. Disulfide bonds link cysteine 50/cysteine 54 and cysteine 61/cysteine 74. N-linked (GlcNAc...) asparagine glycans are attached at residues asparagine 108 and asparagine 183. One can recognise a DSL domain in the interval 173–217 (VICSDNYYGDNCSRLCKKRNDHFGHYVCQPDGNLSCLPGWTGEYC). An intrachain disulfide couples cysteine 175 to cysteine 184. 2 interaction with Notch1 regions span residues 185–187 (SRL) and 191–195 (RNDHF). Residues cysteine 188 and cysteine 200 are joined by a disulfide bond. N-linked (GlcNAc...) asparagine glycosylation occurs at asparagine 205. 25 disulfide bridges follow: cysteine 208/cysteine 217, cysteine 222/cysteine 233, cysteine 226/cysteine 239, cysteine 241/cysteine 250, cysteine 253/cysteine 264, cysteine 259/cysteine 270, cysteine 272/cysteine 281, cysteine 288/cysteine 300, cysteine 294/cysteine 310, cysteine 312/cysteine 321, cysteine 328/cysteine 339, cysteine 333/cysteine 348, cysteine 350/cysteine 359, cysteine 366/cysteine 377, cysteine 371/cysteine 388, cysteine 390/cysteine 399, cysteine 406/cysteine 417, cysteine 411/cysteine 426, cysteine 428/cysteine 437, cysteine 444/cysteine 455, cysteine 449/cysteine 464, cysteine 466/cysteine 475, cysteine 484/cysteine 495, cysteine 489/cysteine 506, and cysteine 508/cysteine 517. EGF-like domains follow at residues 218–251 (QQPICLSGCHEQNGYCSKPAECLCRPGWQGRLCN), 252–282 (ECIPHNGCRHGTCSTPWQCTCDEGWGGLFCD), 284–322 (DLNYCTHHSPCKNGATCSNSGQRSYTCTCRPGYTGVDCE), 324–360 (ELSECDSNPCRNGGSCKDQEDGYHCLCPPGYYGLHCE), 362–400 (STLSCADSPCFNGGSCRERNQGANYACECPPNFTGSNCE), 402–438 (KVDRCTSNPCANGGQCLNRGPSRMCRCRPGFTGTYCE), 440–476 (HVSDCARNPCAHGGTCHDLENGLMCTCPAGFSGRRCE), and 480–518 (SIDACASSPCFNRATCYTDLSTDTFVCNCPYGFVGSRCE). The N-linked (GlcNAc...) asparagine glycan is linked to asparagine 393. The helical transmembrane segment at 530–550 (VAVSLGVGLAVLLVLLGMVAV) threads the bilayer. At 551-685 (AVRQLRLRRP…RNECVIATEV (135 aa)) the chain is on the cytoplasmic side.

In terms of assembly, interacts with NOTCH4. Interacts (via N-terminal DSL and MNNL domains) with NOTCH1 (via EGF-like domains). Expressed in vascular endothelium.

It localises to the cell membrane. Functionally, involved in the Notch signaling pathway as Notch ligand. Activates NOTCH1 and NOTCH4. Involved in angiogenesis; negatively regulates endothelial cell proliferation and migration and angiogenic sprouting. Essential for retinal progenitor proliferation. Required for suppressing rod fates in late retinal progenitors as well as for proper generation of other retinal cell types. During spinal cord neurogenesis, inhibits V2a interneuron fate. The sequence is that of Delta-like protein 4 (DLL4) from Homo sapiens (Human).